We begin with the raw amino-acid sequence, 99 residues long: Nucleoid-associated protein EbfC (99 aa).

This sequence belongs to the YbaB/EbfC family. As to quaternary structure, homodimer.

Its subcellular location is the cytoplasm. The protein resides in the nucleoid. Binds to DNA and alters its conformation. May be involved in regulation of gene expression, nucleoid organization and DNA protection. The sequence is that of Nucleoid-associated protein EbfC from Borrelia turicatae (strain 91E135).